A 378-amino-acid polypeptide reads, in one-letter code: Trans-enoyl reductase poxP (378 aa).

An NADP(+)-binding site is contributed by 62 to 65 (CDWK). 151–158 (SVFATLWI) is a substrate binding site. Residues 187–190 (STST), 210–213 (SPHN), Y228, and 275–276 (LE) contribute to the NADP(+) site. 295–299 (GLAAS) is a substrate binding site. NADP(+) is bound at residue 364-365 (TS).

The protein belongs to the zinc-containing alcohol dehydrogenase family. As to quaternary structure, monomer.

It participates in secondary metabolite biosynthesis. Its function is as follows. Trans-enoyl reductase; part of the gene cluster that mediates the biosynthesis of oxaleimides, cytotoxic compounds containing an unusual disubstituted succinimide moiety. The first step of the pathway is provided by the HR-PKS poxF that serves in a new mode of collaborative biosynthesis with the PKS-NRPS poxE, by providing the olefin containing amino acid substrate via the synthesis of an ACP-bound dec-4-enoate. The cytochrome P450 monooxygenase poxM-catalyzed oxidation at the alpha-position creates the enzyme-bound 2-hydroxydec-4-enoyl-ACP thioester, which may be prone to spontaneous hydrolysis to yield 2-hydroxydec-4-enoic acid due to increased electrophilicity of the carbonyl. 2-hydroxydec-4-enoic acid can then be further oxidized by poxM to yield the alpha-ketoacid 2-oxodec-4-enoicacid, which is reductively aminated by the aminotransferase poxL to yield (S,E)-2-aminodec-4-enoic acid. The Hybrid PKS-NRPS synthetase poxE then performs condensation between the octaketide product of its PKS modules and the amino group of (S,E)-2-aminodec-4-enoic acid which is activated and incorporated by the adenylation domain. The resulting aminoacyl product can be cyclized by the Diels-Alderase PoxQ and reductively released by the reductive (R) domain of poxE to yield an aldehyde intermediate. The released aldehyde is then substrate for a Knoevenagel condensation by the hydrolyase poxO followed by an oxidation at the 5-position of the pyrrolidone ring. The presence of the olefin from the amino acid building block allows for migration of the substituted allyl group to occur. This allylic transposition reaction takes place in a conjugate addition, semipinacol-like fashion to yield a succinimide intermediate. Iterative two-electron oxidations of the C7 methyl of the succinimide intermediate to the carboxylic acid can be catalyzed by one of two remaining cytochrome P450 monooxygenasess poxC or poxD to yield oxaleimide A. Subsequent oxidation yields the maleimide scaffold oxaleimide I. Both oxaleimide A and oxaleimide I can undergo oxidative modifications in the decalin ring to yield the series of products oxaleimides B to H. The polypeptide is Trans-enoyl reductase poxP (Penicillium oxalicum).